Here is a 243-residue protein sequence, read N- to C-terminus: Segregation and condensation protein A (243 aa).

This sequence belongs to the ScpA family. As to quaternary structure, component of a cohesin-like complex composed of ScpA, ScpB and the Smc homodimer, in which ScpA and ScpB bind to the head domain of Smc. The presence of the three proteins is required for the association of the complex with DNA.

The protein resides in the cytoplasm. Functionally, participates in chromosomal partition during cell division. May act via the formation of a condensin-like complex containing Smc and ScpB that pull DNA away from mid-cell into both cell halves. The sequence is that of Segregation and condensation protein A from Staphylococcus aureus (strain NCTC 8325 / PS 47).